We begin with the raw amino-acid sequence, 180 residues long: Crossover junction endodeoxyribonuclease RuvC (180 aa).

Active-site residues include D7, E66, and D138. Mg(2+) is bound by residues D7, E66, and D138.

It belongs to the RuvC family. As to quaternary structure, homodimer which binds Holliday junction (HJ) DNA. The HJ becomes 2-fold symmetrical on binding to RuvC with unstacked arms; it has a different conformation from HJ DNA in complex with RuvA. In the full resolvosome a probable DNA-RuvA(4)-RuvB(12)-RuvC(2) complex forms which resolves the HJ. The cofactor is Mg(2+).

The protein localises to the cytoplasm. The enzyme catalyses Endonucleolytic cleavage at a junction such as a reciprocal single-stranded crossover between two homologous DNA duplexes (Holliday junction).. Functionally, the RuvA-RuvB-RuvC complex processes Holliday junction (HJ) DNA during genetic recombination and DNA repair. Endonuclease that resolves HJ intermediates. Cleaves cruciform DNA by making single-stranded nicks across the HJ at symmetrical positions within the homologous arms, yielding a 5'-phosphate and a 3'-hydroxyl group; requires a central core of homology in the junction. The consensus cleavage sequence is 5'-(A/T)TT(C/G)-3'. Cleavage occurs on the 3'-side of the TT dinucleotide at the point of strand exchange. HJ branch migration catalyzed by RuvA-RuvB allows RuvC to scan DNA until it finds its consensus sequence, where it cleaves and resolves the cruciform DNA. This is Crossover junction endodeoxyribonuclease RuvC from Paraburkholderia phytofirmans (strain DSM 17436 / LMG 22146 / PsJN) (Burkholderia phytofirmans).